Consider the following 309-residue polypeptide: MISTERIQPNLVTVADMDAADAIDLIHEAQAYKAGKQAVLTAPAYAVNLFFENSTRTKTSFQMAQMKLGMNVLEFEAGTSSVKKGESLYDTVKTMESIGVNVAVIRHPENEYYNQLINHSDLKIGIVNGGDGSGQHPSQCLLDMMTINEEFGDFKGLKVLIIGDLSHSRVAHSNAMMLNRLGAEVYFAGPEKWYDPTLEQYGTFGDFDELLPQMDVVNLLRVQNERLTTADGQAFDANQYHQAYGLTLERAAKMKQGAIIMHPAPVNRGVEIDSSLVEAPNSRIFQQMTNGVYTRMAILSRVLRYQGLM.

Carbamoyl phosphate-binding residues include arginine 56 and threonine 57. Residue lysine 84 participates in L-aspartate binding. 3 residues coordinate carbamoyl phosphate: arginine 106, histidine 136, and glutamine 139. Residues arginine 169 and arginine 221 each coordinate L-aspartate. The carbamoyl phosphate site is built by alanine 264 and proline 265.

This sequence belongs to the aspartate/ornithine carbamoyltransferase superfamily. ATCase family. In terms of assembly, heterododecamer (2C3:3R2) of six catalytic PyrB chains organized as two trimers (C3), and six regulatory PyrI chains organized as three dimers (R2).

The catalysed reaction is carbamoyl phosphate + L-aspartate = N-carbamoyl-L-aspartate + phosphate + H(+). It participates in pyrimidine metabolism; UMP biosynthesis via de novo pathway; (S)-dihydroorotate from bicarbonate: step 2/3. Its function is as follows. Catalyzes the condensation of carbamoyl phosphate and aspartate to form carbamoyl aspartate and inorganic phosphate, the committed step in the de novo pyrimidine nucleotide biosynthesis pathway. This Limosilactobacillus reuteri subsp. reuteri (strain JCM 1112) (Lactobacillus reuteri) protein is Aspartate carbamoyltransferase catalytic subunit.